The sequence spans 1054 residues: Trehalose synthase complex regulatory subunit TPS3 (1054 aa).

Residues alanine 112–proline 133 are disordered. A compositionally biased stretch (polar residues) spans asparagine 122–arginine 132. 3 positions are modified to phosphoserine: serine 148, serine 150, and serine 181. Disordered regions lie at residues alanine 155 to lysine 203 and glutamine 223 to asparagine 250. The span at leucine 170–phenylalanine 182 shows a compositional bias: polar residues. Low complexity predominate over residues serine 235–serine 249. Threonine 265 carries the post-translational modification Phosphothreonine. Phosphoserine occurs at positions 267 and 273. The interval lysine 287–asparagine 778 is glycosyltransferase. Serine 960 carries the phosphoserine modification.

It in the N-terminal section; belongs to the glycosyltransferase 20 family. As to quaternary structure, the trehalose synthase complex is composed of the two catalytic subunits TPS1 and TPS2 and at least one of the two regulatory subunits TPS3 or TSL1.

Its subcellular location is the cytoplasm. Functionally, regulatory subunit of the trehalose synthase complex that catalyzes the production of trehalose from glucose-6-phosphate and UDP-glucose in a two step process. May stabilize the trehalose synthase complex. The protein is Trehalose synthase complex regulatory subunit TPS3 (TPS3) of Saccharomyces cerevisiae (strain ATCC 204508 / S288c) (Baker's yeast).